A 194-amino-acid polypeptide reads, in one-letter code: Fibroblast growth factor 7 (194 aa).

The N-terminal stretch at 1–31 (MHKWILTWILPTLLYRSCFHIICLVGTISLA) is a signal peptide. Residue asparagine 45 is glycosylated (N-linked (GlcNAc...) asparagine).

The protein belongs to the heparin-binding growth factors family. As to quaternary structure, interacts with FGFBP1. Interacts with FGFR2. Affinity between fibroblast growth factors (FGFs) and their receptors is increased by heparan sulfate glycosaminoglycans that function as coreceptors. In terms of tissue distribution, epithelial cell.

The protein resides in the secreted. In terms of biological role, plays an important role in the regulation of embryonic development, cell proliferation and cell differentiation. Required for normal branching morphogenesis. Growth factor active on keratinocytes. Possible major paracrine effector of normal epithelial cell proliferation. The polypeptide is Fibroblast growth factor 7 (FGF7) (Homo sapiens (Human)).